A 337-amino-acid polypeptide reads, in one-letter code: Ribosomal RNA small subunit methyltransferase H (337 aa).

S-adenosyl-L-methionine is bound by residues 36 to 38, Asp-56, Phe-82, Asp-100, and Gln-107; that span reads GGH. The tract at residues 317–337 is disordered; sequence RRSGRIPNPQSPIPASQGDAR.

Belongs to the methyltransferase superfamily. RsmH family.

The protein resides in the cytoplasm. It catalyses the reaction cytidine(1402) in 16S rRNA + S-adenosyl-L-methionine = N(4)-methylcytidine(1402) in 16S rRNA + S-adenosyl-L-homocysteine + H(+). Functionally, specifically methylates the N4 position of cytidine in position 1402 (C1402) of 16S rRNA. This chain is Ribosomal RNA small subunit methyltransferase H, found in Xanthomonas oryzae pv. oryzae (strain KACC10331 / KXO85).